The chain runs to 296 residues: Acetylglutamate kinase (296 aa).

Residues 69-70 (GG), Arg91, and Asn193 contribute to the substrate site.

This sequence belongs to the acetylglutamate kinase family. ArgB subfamily.

It localises to the cytoplasm. The enzyme catalyses N-acetyl-L-glutamate + ATP = N-acetyl-L-glutamyl 5-phosphate + ADP. The protein operates within amino-acid biosynthesis; L-arginine biosynthesis; N(2)-acetyl-L-ornithine from L-glutamate: step 2/4. Catalyzes the ATP-dependent phosphorylation of N-acetyl-L-glutamate. In Delftia acidovorans (strain DSM 14801 / SPH-1), this protein is Acetylglutamate kinase.